Reading from the N-terminus, the 275-residue chain is tRNA pseudouridine synthase A (275 aa).

The active-site Nucleophile is D72. A substrate-binding site is contributed by Y133.

It belongs to the tRNA pseudouridine synthase TruA family. As to quaternary structure, homodimer.

The catalysed reaction is uridine(38/39/40) in tRNA = pseudouridine(38/39/40) in tRNA. Functionally, formation of pseudouridine at positions 38, 39 and 40 in the anticodon stem and loop of transfer RNAs. This is tRNA pseudouridine synthase A from Gluconobacter oxydans (strain 621H) (Gluconobacter suboxydans).